A 1428-amino-acid chain; its full sequence is uncharacterized protein (1428 aa).

Disordered regions lie at residues 1–53, 249–274, and 377–413; these read MAKK…AFKV, DIKH…KDSK, and KNGI…ETRA. Positions 16–33 are enriched in polar residues; sequence ATTSIPSRSASSPANKNQ. The span at 34–51 shows a compositional bias: basic and acidic residues; the sequence is VKGEKNNKTQKVEPKNAF. Over residues 256-265 the composition is skewed to polar residues; the sequence is KETQPSNQVD. The Helicase ATP-binding domain maps to 641 to 811; that stretch reads IDAVNNSQLL…FEGSNLITIP (171 aa). 654–661 lines the ATP pocket; sequence GDTGCGKS. A DEAH box motif is present at residues 758-761; that stretch reads DEVH. One can recognise a Helicase C-terminal domain in the interval 886 to 1064; sequence LIVYLLKYIF…EVVLRVKMCQ (179 aa).

It belongs to the helicase family. SKI2 subfamily.

It localises to the cytoplasm. This is an uncharacterized protein from Schizosaccharomyces pombe (strain 972 / ATCC 24843) (Fission yeast).